Consider the following 620-residue polypeptide: Cryptochrome-1 (620 aa).

Positions 3–132 (VNAVHWFRKG…EVIVRISHTL (130 aa)) constitute a Photolyase/cryptochrome alpha/beta domain. 3 short sequence motifs (LIR) span residues 50-54 (NRWRF), 82-87 (DVFPRL), and 151-156 (KRFQTL). FAD is bound at residue Ser-252. 4 short sequence motifs (LIR) span residues 255–260 (LRFGCL), 271–276 (DLYKKV), 285–290 (SLYGQL), and 335–339 (TGFPW). An FAD-binding site is contributed by Gln-289. His-355 is a binding site for FAD. The LIR 8 motif lies at 379 to 384 (KVFEEL). Position 387 to 389 (387 to 389 (DAD)) interacts with FAD. 5 short sequence motifs (LIR) span residues 395–400 (GSWMWL), 411–416 (HCYCPV), 430–435 (RRYLPV), 486–491 (QIYQQL), and 492–497 (SRYRGL). Residues 592-620 (GTGISAGKRPNPEEETQSVGPKVQRQSTN) form a disordered region.

Belongs to the DNA photolyase class-1 family. As to quaternary structure, component of the circadian core oscillator, which includes the CRY proteins, CLOCK or NPAS2, BMAL1 or BMAL2, CSNK1E, and the PER proteins. Requires FAD as cofactor. (6R)-5,10-methylene-5,6,7,8-tetrahydrofolate serves as cofactor. As to expression, expressed in the retina. High levels found in ganglion cells of the retina.

It localises to the cytoplasm. Its subcellular location is the nucleus. Its function is as follows. Transcriptional repressor which forms a core component of the circadian clock. The circadian clock, an internal time-keeping system, regulates various physiological processes through the generation of approximately 24 hour circadian rhythms in gene expression, which are translated into rhythms in metabolism and behavior. It is derived from the Latin roots 'circa' (about) and 'diem' (day) and acts as an important regulator of a wide array of physiological functions including metabolism, sleep, body temperature, blood pressure, endocrine, immune, cardiovascular, and renal function. Consists of two major components: the central clock, residing in the suprachiasmatic nucleus (SCN) of the brain, and the peripheral clocks that are present in nearly every tissue and organ system. Both the central and peripheral clocks can be reset by environmental cues, also known as Zeitgebers (German for 'timegivers'). The predominant Zeitgeber for the central clock is light, which is sensed by retina and signals directly to the SCN. The central clock entrains the peripheral clocks through neuronal and hormonal signals, body temperature and feeding-related cues, aligning all clocks with the external light/dark cycle. Circadian rhythms allow an organism to achieve temporal homeostasis with its environment at the molecular level by regulating gene expression to create a peak of protein expression once every 24 hours to control when a particular physiological process is most active with respect to the solar day. Transcription and translation of core clock components (CLOCK, NPAS2, BMAL1, BMAL2, PER1, PER2, PER3, CRY1 and CRY2) plays a critical role in rhythm generation, whereas delays imposed by post-translational modifications (PTMs) are important for determining the period (tau) of the rhythms (tau refers to the period of a rhythm and is the length, in time, of one complete cycle). A diurnal rhythm is synchronized with the day/night cycle, while the ultradian and infradian rhythms have a period shorter and longer than 24 hours, respectively. Disruptions in the circadian rhythms contribute to the pathology of cardiovascular diseases, cancer, metabolic syndromes and aging. A transcription/translation feedback loop (TTFL) forms the core of the molecular circadian clock mechanism. Transcription factors, CLOCK or NPAS2 and BMAL1 or BMAL2, form the positive limb of the feedback loop, act in the form of a heterodimer and activate the transcription of core clock genes and clock-controlled genes (involved in key metabolic processes), harboring E-box elements (5'-CACGTG-3') within their promoters. The core clock genes: PER1/2/3 and CRY1/2 which are transcriptional repressors form the negative limb of the feedback loop and interact with the CLOCK|NPAS2-BMAL1|BMAL2 heterodimer inhibiting its activity and thereby negatively regulating their own expression. This heterodimer also activates nuclear receptors NR1D1, NR1D2, RORA, RORB and RORG, which form a second feedback loop and which activate and repress BMAL1 transcription, respectively. CRY1 and CRY2 have redundant functions but also differential and selective contributions at least in defining the pace of the SCN circadian clock and its circadian transcriptional outputs. More potent transcriptional repressor in cerebellum and liver than CRY2, though more effective in lengthening the period of the SCN oscillator. On its side, CRY2 seems to play a critical role in tuning SCN circadian period by opposing the action of CRY1. With CRY2, is dispensable for circadian rhythm generation but necessary for the development of intercellular networks for rhythm synchrony. Capable of translocating circadian clock core proteins such as PER proteins to the nucleus. Interacts with CLOCK:BMAL1 independently of PER proteins and is found at CLOCK:BMAL1-bound sites, suggesting that CRY may act as a molecular gatekeeper to maintain CLOCK:BMAL1 in a poised and repressed state until the proper time for transcriptional activation. The sequence is that of Cryptochrome-1 (CRY1) from Sylvia borin (Garden warbler).